A 37-amino-acid polypeptide reads, in one-letter code: uncharacterized protein (37 aa).

The interval 1–37 is disordered; sequence MGQVEKARQGQFARPHHSDSQRRVRAWSRIQRRARSF. Positions 23-37 are enriched in basic residues; that stretch reads RVRAWSRIQRRARSF.

This is an uncharacterized protein from Bacillus phage phi105 (Bacteriophage phi-105).